Here is a 386-residue protein sequence, read N- to C-terminus: Beta-citrylglutamate synthase B (386 aa).

The 186-residue stretch at 119–304 folds into the ATP-grasp domain; sequence FQELAGHGVP…VAGIIADYAA (186 aa). ATP is bound by residues lysine 158, 193-203, and arginine 219; that span reads QKYVKESHGRD. Mg(2+)-binding residues include aspartate 264, glutamate 277, and asparagine 279. Aspartate 264, glutamate 277, and asparagine 279 together coordinate Mn(2+). Positions 325 to 359 are disordered; sequence ASETSEPELGPPASTAVDNMSASSSSVDSDPESTE. A compositionally biased stretch (low complexity) spans 338–352; sequence STAVDNMSASSSSVD.

It belongs to the RimK family. Mg(2+) is required as a cofactor. It depends on Mn(2+) as a cofactor.

It localises to the cytoplasm. It carries out the reaction citrate + L-glutamate + ATP = beta-citrylglutamate + ADP + phosphate + H(+). The enzyme catalyses N-acetyl-L-aspartate + L-glutamate + ATP = N-acetyl-L-aspartyl-L-glutamate + ADP + phosphate + H(+). In terms of biological role, catalyzes the synthesis of beta-citryl-L-glutamate and N-acetyl-L-aspartyl-L-glutamate. Beta-citryl-L-glutamate is synthesized more efficiently than N-acetyl-L-aspartyl-L-glutamate. This Homo sapiens (Human) protein is Beta-citrylglutamate synthase B (RIMKLB).